Reading from the N-terminus, the 313-residue chain is Protoheme IX farnesyltransferase (313 aa).

9 helical membrane-spanning segments follow: residues 33-53 (IALM…PVML), 59-79 (MPSW…AGSA), 107-127 (VEPA…TLMF), 129-149 (LLVN…YVFV), 162-182 (IVIG…AVTG), 188-208 (AVLL…ALAI), 212-232 (DDYA…EVVT), 252-272 (VADI…WFVA), and 292-312 (LFHM…AAAL).

The protein belongs to the UbiA prenyltransferase family. Protoheme IX farnesyltransferase subfamily.

The protein localises to the cell membrane. It carries out the reaction heme b + (2E,6E)-farnesyl diphosphate + H2O = Fe(II)-heme o + diphosphate. It functions in the pathway porphyrin-containing compound metabolism; heme O biosynthesis; heme O from protoheme: step 1/1. Functionally, converts heme B (protoheme IX) to heme O by substitution of the vinyl group on carbon 2 of heme B porphyrin ring with a hydroxyethyl farnesyl side group. The protein is Protoheme IX farnesyltransferase of Parafrankia sp. (strain EAN1pec).